The following is a 153-amino-acid chain: ATP synthase subunit b' (153 aa).

A helical transmembrane segment spans residues 20–40 (TLPLMAVQVVLLTFILNALFF).

The protein belongs to the ATPase B chain family. In terms of assembly, F-type ATPases have 2 components, F(1) - the catalytic core - and F(0) - the membrane proton channel. F(1) has five subunits: alpha(3), beta(3), gamma(1), delta(1), epsilon(1). F(0) has four main subunits: a(1), b(1), b'(1) and c(10-14). The alpha and beta chains form an alternating ring which encloses part of the gamma chain. F(1) is attached to F(0) by a central stalk formed by the gamma and epsilon chains, while a peripheral stalk is formed by the delta, b and b' chains.

It localises to the cellular thylakoid membrane. Functionally, f(1)F(0) ATP synthase produces ATP from ADP in the presence of a proton or sodium gradient. F-type ATPases consist of two structural domains, F(1) containing the extramembraneous catalytic core and F(0) containing the membrane proton channel, linked together by a central stalk and a peripheral stalk. During catalysis, ATP synthesis in the catalytic domain of F(1) is coupled via a rotary mechanism of the central stalk subunits to proton translocation. In terms of biological role, component of the F(0) channel, it forms part of the peripheral stalk, linking F(1) to F(0). The b'-subunit is a diverged and duplicated form of b found in plants and photosynthetic bacteria. The polypeptide is ATP synthase subunit b' (Prochlorococcus marinus (strain NATL2A)).